Consider the following 2742-residue polypeptide: Neurobeachin-like protein 2 (2742 aa).

Disordered stretches follow at residues 1312-1333 (ALSP…PSES) and 1356-1434 (LERA…QQTP). Residues 1384 to 1394 (TPSPLDGPRPF) show a composition bias toward pro residues. Polar residues predominate over residues 1421–1433 (GDDTSNTSNPQQT). Phosphothreonine is present on T1855. The BEACH-type PH domain occupies 1903–2028 (EKREKLVLSA…LRNQVYSLLL (126 aa)). The 293-residue stretch at 2041-2333 (RSPLEMLRAS…QLLKEPHPPR (293 aa)) folds into the BEACH domain. WD repeat units follow at residues 2374 to 2412 (LVLA…TWLP), 2436 to 2479 (KLLS…SLPR), 2482 to 2519 (LLNQ…VWRL), 2532 to 2570 (KPVQ…IHTV), 2577 to 2619 (AALR…TYSL), 2627 to 2662 (RLRA…ILHL), and 2670 to 2705 (PPLP…VGAG). Residues S2727 and S2730 each carry the phosphoserine modification.

It belongs to the WD repeat neurobeachin family.

Its subcellular location is the endoplasmic reticulum. Functionally, probably involved in thrombopoiesis. Plays a role in the development or secretion of alpha-granules, that contain several growth factors important for platelet biogenesis. The chain is Neurobeachin-like protein 2 (Nbeal2) from Mus musculus (Mouse).